A 520-amino-acid chain; its full sequence is Cytochrome P450 monooxygenase TRI4 (520 aa).

Residues 10-30 (LVNIPISHAVGVVAASTVIYF) traverse the membrane as a helical segment. N447 carries an N-linked (GlcNAc...) asparagine glycan. C455 provides a ligand contact to heme.

This sequence belongs to the cytochrome P450 family. Heme serves as cofactor.

The protein resides in the membrane. It participates in sesquiterpene biosynthesis; trichothecene biosynthesis. In terms of biological role, cytochrome P450 monooxygenase; part of the core gene cluster that mediates the biosynthesis of trichothecenes, a very large family of chemically related bicyclic sesquiterpene compounds acting as mycotoxins, including T2-toxin. The biosynthesis of trichothecenes begins with the cyclization of farnesyl diphosphate to trichodiene and is catalyzed by the trichodiene synthase TRI5. Trichodiene undergoes a series of oxygenations catalyzed by the cytochrome P450 monooxygenase TRI4. TRI4 controls the addition of four oxygens at C-2, C-3, C-11, and the C-12, C-13-epoxide to form the intermediate isotrichotriol. Isotrichotriol then undergoes a non-enzymatic isomerization and cyclization to form isotrichodermol. During this process, the oxygen at the C-2 position becomes the pyran ring oxygen and the hydroxyl group at C-11 is lost. More complex type A trichothecenes are built by modifying isotrichodermol through a series of paired hydroxylation and acetylation or acylation steps. Isotrichodermol is converted to isotrichodermin by the acetyltransferase TRI101. TRI101 encodes a C-3 transacetylase that acts as a self-protection or resistance factor during biosynthesis and that the presence of a free C-3 hydroxyl group is a key component of Fusarium trichothecene phytotoxicity. A second hydroxyl group is added to C-15 by the trichothecene C-15 hydroxylase TRI11, producing 15-decalonectrin, which is then acetylated by TRI3, producing calonectrin. A third hydroxyl group is added at C-4 by the cytochrome P450 monooxygenase TRI13, converting calonectrin to 3,15-diacetoxyspirpenol, which is subsequently acetylated by the acetyltransferase TRI7. A fourth hydroxyl group is added to C-8 by the cytochrome P450 monooxygenase TRI1, followed by the addition of an isovaleryl moiety by TRI16. Finally, the acetyl group is removed from the C-3 position by the trichothecene C-3 esterase TRI8 to produce T-2 toxin. The sequence is that of Cytochrome P450 monooxygenase TRI4 from Fusarium sporotrichioides.